We begin with the raw amino-acid sequence, 92 residues long: MPRSLKKGPFVDEHLLNKVDAQNEKGTKQVIKTWSRRSTILPDFIGHTFAVHDGRKHVPVFIDDSMVGHKLGEFAPTKTFKGHVKDDMKGRR.

The protein belongs to the universal ribosomal protein uS19 family.

Protein S19 forms a complex with S13 that binds strongly to the 16S ribosomal RNA. This chain is Small ribosomal subunit protein uS19, found in Corynebacterium urealyticum (strain ATCC 43042 / DSM 7109).